Consider the following 208-residue polypeptide: Thymidylate kinase (208 aa).

12–19 (GVDGAGKS) contributes to the ATP binding site.

It belongs to the thymidylate kinase family.

The enzyme catalyses dTMP + ATP = dTDP + ADP. Functionally, phosphorylation of dTMP to form dTDP in both de novo and salvage pathways of dTTP synthesis. The polypeptide is Thymidylate kinase (Bordetella bronchiseptica (strain ATCC BAA-588 / NCTC 13252 / RB50) (Alcaligenes bronchisepticus)).